Reading from the N-terminus, the 252-residue chain is uncharacterized protein (252 aa).

A coiled-coil region spans residues 106–140 (IQSLHARRDHLDNAVEQLKSQLSRLDSSVAILKSQ).

This is an uncharacterized protein from Caenorhabditis elegans.